The chain runs to 233 residues: MRSGLLPPGLNESDAESNSEDEATLENSGLNLQEDKEDESIRKTEIIDFSTDEPKTETESNVNAYEECPSGIPIDMWNKFQELHKKHSEQKSTTSRFRGKRRKRSRKDKLKNEKELHSEPSSNETQWKELTQYFGVNDRFDPPVKRKKVEKSGLEKRIDQAVEEWNIEKAEELSNQLATRELGVKIAKAVACHNFVKAKKEVENSQAARKKKKLAWGFEAKKRWETKSNMGYM.

Residues 1-126 (MRSGLLPPGL…HSEPSSNETQ (126 aa)) are disordered. The segment covering 13-24 (SDAESNSEDEAT) has biased composition (acidic residues). Over residues 39 to 58 (ESIRKTEIIDFSTDEPKTET) the composition is skewed to basic and acidic residues. Over residues 97-109 (FRGKRRKRSRKDK) the composition is skewed to basic residues. Residues 144–164 (VKRKKVEKSGLEKRIDQAVEE) adopt a coiled-coil conformation.

This Pongo abelii (Sumatran orangutan) protein is Protein FAM204A (FAM204A).